Consider the following 105-residue polypeptide: Large ribosomal subunit protein bL21 (105 aa).

The protein belongs to the bacterial ribosomal protein bL21 family. Part of the 50S ribosomal subunit. Contacts protein L20.

Functionally, this protein binds to 23S rRNA in the presence of protein L20. The sequence is that of Large ribosomal subunit protein bL21 from Parafrankia sp. (strain EAN1pec).